Consider the following 307-residue polypeptide: Bifunctional protein FolD (307 aa).

NADP(+) contacts are provided by residues 170–172 (GRS), Ser-195, and Ile-236.

This sequence belongs to the tetrahydrofolate dehydrogenase/cyclohydrolase family. Homodimer.

The catalysed reaction is (6R)-5,10-methylene-5,6,7,8-tetrahydrofolate + NADP(+) = (6R)-5,10-methenyltetrahydrofolate + NADPH. It carries out the reaction (6R)-5,10-methenyltetrahydrofolate + H2O = (6R)-10-formyltetrahydrofolate + H(+). Its pathway is one-carbon metabolism; tetrahydrofolate interconversion. Its function is as follows. Catalyzes the oxidation of 5,10-methylenetetrahydrofolate to 5,10-methenyltetrahydrofolate and then the hydrolysis of 5,10-methenyltetrahydrofolate to 10-formyltetrahydrofolate. In Sinorhizobium fredii (strain NBRC 101917 / NGR234), this protein is Bifunctional protein FolD.